We begin with the raw amino-acid sequence, 261 residues long: Phosphatidylglycerol--prolipoprotein diacylglyceryl transferase (261 aa).

The next 3 helical transmembrane spans lie at 20 to 40 (LAIH…VWLA), 54 to 74 (IIDF…LYYV), and 88 to 108 (IIAI…GAIV). Position 139 (arginine 139) interacts with a 1,2-diacyl-sn-glycero-3-phospho-(1'-sn-glycerol). 2 helical membrane-spanning segments follow: residues 175–195 (MPTF…VMVF) and 235–255 (ARVS…LFVY).

Belongs to the Lgt family.

It is found in the cell membrane. The enzyme catalyses L-cysteinyl-[prolipoprotein] + a 1,2-diacyl-sn-glycero-3-phospho-(1'-sn-glycerol) = an S-1,2-diacyl-sn-glyceryl-L-cysteinyl-[prolipoprotein] + sn-glycerol 1-phosphate + H(+). It functions in the pathway protein modification; lipoprotein biosynthesis (diacylglyceryl transfer). Catalyzes the transfer of the diacylglyceryl group from phosphatidylglycerol to the sulfhydryl group of the N-terminal cysteine of a prolipoprotein, the first step in the formation of mature lipoproteins. This chain is Phosphatidylglycerol--prolipoprotein diacylglyceryl transferase, found in Lactococcus lactis subsp. cremoris (strain MG1363).